The following is a 177-amino-acid chain: MSEFVTVARPYAKAAFDFAVEHQAVERWQNMLAFTAQVTRNEQIAELLSGAVAPETMSTTFIAVCGDQLDEPAQNFIRVMAENGRLLVLPEVLQQFIQLRASLESTVDVEVSSARALNDEQLAKIAAAMEKRLSRKVKLNCKIDKSVMAGVVIRAGDMVIDGSVRGRLERLADVLQS.

It belongs to the ATPase delta chain family. In terms of assembly, F-type ATPases have 2 components, F(1) - the catalytic core - and F(0) - the membrane proton channel. F(1) has five subunits: alpha(3), beta(3), gamma(1), delta(1), epsilon(1). F(0) has three main subunits: a(1), b(2) and c(10-14). The alpha and beta chains form an alternating ring which encloses part of the gamma chain. F(1) is attached to F(0) by a central stalk formed by the gamma and epsilon chains, while a peripheral stalk is formed by the delta and b chains.

It is found in the cell inner membrane. Its function is as follows. F(1)F(0) ATP synthase produces ATP from ADP in the presence of a proton or sodium gradient. F-type ATPases consist of two structural domains, F(1) containing the extramembraneous catalytic core and F(0) containing the membrane proton channel, linked together by a central stalk and a peripheral stalk. During catalysis, ATP synthesis in the catalytic domain of F(1) is coupled via a rotary mechanism of the central stalk subunits to proton translocation. This protein is part of the stalk that links CF(0) to CF(1). It either transmits conformational changes from CF(0) to CF(1) or is implicated in proton conduction. The sequence is that of ATP synthase subunit delta from Yersinia pseudotuberculosis serotype O:1b (strain IP 31758).